The following is a 256-amino-acid chain: Stanniocalcin (256 aa).

Residues 1–18 (MLAKFGLCAVFLVLGTAA) form the signal peptide. A propeptide spanning residues 19-33 (TFDTDPEEASPRRAR) is cleaved from the precursor. Residue N62 is glycosylated (N-linked (GlcNAc...) asparagine). The segment at 204-241 (QGSNQGPNSAPAGWRWPMGSPPSFKIQPSMRGRDPTHL) is disordered.

It belongs to the stanniocalcin family. As to quaternary structure, homodimer; disulfide-linked. Produced and secreted by the corpuscles of Stannius.

The protein localises to the secreted. Functionally, its primary function is the prevention of hypercalcemia. Upon release into the circulation, it lowers calcium transport by the gills, thereby reducing its rate of influx from the environment into the extracellular compartment. STC also stimulates phosphate reabsorption by renal proximal tubules. The consequence of this action is increased levels of plasma phosphate, which combines with excess calcium and promotes its disposal into bone and scales. The sequence is that of Stanniocalcin (stc) from Oncorhynchus mykiss (Rainbow trout).